A 390-amino-acid chain; its full sequence is GTPase Obg (390 aa).

The region spanning 1 to 159 (MKFVDEASIL…RELLLELMLL (159 aa)) is the Obg domain. Positions 127–147 (NTRFKSSVNRTPRQKTNGTPG) are disordered. The span at 129 to 145 (RFKSSVNRTPRQKTNGT) shows a compositional bias: polar residues. Residues 160–333 (ADVGMLGMPN…LCWDVMTFII (174 aa)) enclose the OBG-type G domain. Residues 166–173 (GMPNAGKS), 191–195 (FTTLV), 213–216 (DIPG), 283–286 (NKID), and 314–316 (SAA) contribute to the GTP site. The Mg(2+) site is built by S173 and T193.

Belongs to the TRAFAC class OBG-HflX-like GTPase superfamily. OBG GTPase family. Monomer. It depends on Mg(2+) as a cofactor.

Its subcellular location is the cytoplasm. An essential GTPase which binds GTP, GDP and possibly (p)ppGpp with moderate affinity, with high nucleotide exchange rates and a fairly low GTP hydrolysis rate. Plays a role in control of the cell cycle, stress response, ribosome biogenesis and in those bacteria that undergo differentiation, in morphogenesis control. This chain is GTPase Obg, found in Escherichia coli (strain K12 / DH10B).